Here is a 568-residue protein sequence, read N- to C-terminus: bZIP transcription factor 60 (568 aa).

Low complexity-rich tracts occupy residues M1–L13 and T60–A78. Disordered stretches follow at residues M1–D29 and D45–Q134. The Cytoplasmic portion of the chain corresponds to M1–K240. Over residues G103 to K113 the composition is skewed to basic and acidic residues. The 61-residue stretch at E111–L171 folds into the bZIP domain. The tract at residues K113 to K144 is basic motif. The tract at residues I150–I157 is leucine-zipper. Residues V241–P261 traverse the membrane as a helical segment. Over A262–L568 the chain is Lumenal. N307, N452, N456, N488, and N499 each carry an N-linked (GlcNAc...) asparagine glycan. Positions A479–V510 are disordered.

Belongs to the bZIP family.

The protein localises to the endoplasmic reticulum membrane. It is found in the nucleus. Functionally, transcription factor involved in endoplasmic reticulum (ER) stress response. Acts as a ER stress sensor and activates the transcription factor BZIP50 and the chaperone BIP1. This Oryza sativa subsp. japonica (Rice) protein is bZIP transcription factor 60.